The chain runs to 83 residues: Mu-theraphotoxin-Hhn2j 4 (83 aa).

An N-terminal signal peptide occupies residues 1-21; the sequence is MKASMFLALAGLVLLFVVGYA. A propeptide spanning residues 22 to 48 is cleaved from the precursor; sequence SESEEKEFPIELLSKIFAVDVFKGEGR. Intrachain disulfides connect C50–C65, C57–C70, and C64–C77. A Leucine amide modification is found at L81.

This sequence belongs to the neurotoxin 10 (Hwtx-1) family. 15 (Hntx-3) subfamily. Monomer. In terms of tissue distribution, expressed by the venom gland.

Its subcellular location is the secreted. Functionally, lethal neurotoxin. Selectively blocks tetrodotoxin-sensitive voltage-gated sodium channels (Nav). Does not affect tetrodotoxin-resistant voltage-gated sodium channels or calcium channels. The protein is Mu-theraphotoxin-Hhn2j 4 of Cyriopagopus hainanus (Chinese bird spider).